The primary structure comprises 159 residues: 3-hydroxyacyl-[acyl-carrier-protein] dehydratase FabZ (159 aa).

H58 is a catalytic residue.

This sequence belongs to the thioester dehydratase family. FabZ subfamily.

It localises to the cytoplasm. The enzyme catalyses a (3R)-hydroxyacyl-[ACP] = a (2E)-enoyl-[ACP] + H2O. Functionally, involved in unsaturated fatty acids biosynthesis. Catalyzes the dehydration of short chain beta-hydroxyacyl-ACPs and long chain saturated and unsaturated beta-hydroxyacyl-ACPs. In Helicobacter pylori (strain J99 / ATCC 700824) (Campylobacter pylori J99), this protein is 3-hydroxyacyl-[acyl-carrier-protein] dehydratase FabZ.